The chain runs to 448 residues: D-inositol 3-phosphate glycosyltransferase (448 aa).

1D-myo-inositol 3-phosphate contacts are provided by residues H35, 46-51 (DAGGLN), K104, Y137, T161, and R181. UDP-N-acetyl-alpha-D-glucosamine is bound at residue G49. Residues R255, K260, and M321 each coordinate UDP-N-acetyl-alpha-D-glucosamine. The Mg(2+) site is built by Y330, R331, and A333. 2 residues coordinate UDP-N-acetyl-alpha-D-glucosamine: E343 and E351. T357 contributes to the Mg(2+) binding site.

Belongs to the glycosyltransferase group 1 family. MshA subfamily. In terms of assembly, homodimer.

The catalysed reaction is 1D-myo-inositol 3-phosphate + UDP-N-acetyl-alpha-D-glucosamine = 1D-myo-inositol 2-acetamido-2-deoxy-alpha-D-glucopyranoside 3-phosphate + UDP + H(+). In terms of biological role, catalyzes the transfer of a N-acetyl-glucosamine moiety to 1D-myo-inositol 3-phosphate to produce 1D-myo-inositol 2-acetamido-2-deoxy-glucopyranoside 3-phosphate in the mycothiol biosynthesis pathway. The protein is D-inositol 3-phosphate glycosyltransferase of Acidothermus cellulolyticus (strain ATCC 43068 / DSM 8971 / 11B).